The primary structure comprises 622 residues: uncharacterized protein (622 aa).

Positions 157 to 166 (LKESPLRDQQ) are enriched in basic and acidic residues. The tract at residues 157–238 (LKESPLRDQQ…GLPDHNSISE (82 aa)) is disordered.

This is an uncharacterized protein from Homo sapiens (Human).